A 117-amino-acid chain; its full sequence is Large ribosomal subunit protein uL18 (117 aa).

It belongs to the universal ribosomal protein uL18 family. In terms of assembly, part of the 50S ribosomal subunit; part of the 5S rRNA/L5/L18/L25 subcomplex. Contacts the 5S and 23S rRNAs.

This is one of the proteins that bind and probably mediate the attachment of the 5S RNA into the large ribosomal subunit, where it forms part of the central protuberance. In Yersinia enterocolitica serotype O:8 / biotype 1B (strain NCTC 13174 / 8081), this protein is Large ribosomal subunit protein uL18.